Reading from the N-terminus, the 272-residue chain is HMP-PP phosphatase (272 aa).

The Nucleophile role is filled by aspartate 8. Positions 8, 10, and 212 each coordinate Mg(2+).

Belongs to the HAD-like hydrolase superfamily. Cof family. Mg(2+) serves as cofactor.

The catalysed reaction is 4-amino-2-methyl-5-(diphosphooxymethyl)pyrimidine + H2O = 4-amino-2-methyl-5-(phosphooxymethyl)pyrimidine + phosphate + H(+). Catalyzes the hydrolysis of 4-amino-2-methyl-5-hydroxymethylpyrimidine pyrophosphate (HMP-PP) to 4-amino-2-methyl-5-hydroxymethylpyrimidine phosphate (HMP-P). This is HMP-PP phosphatase from Escherichia coli O81 (strain ED1a).